The following is a 284-amino-acid chain: ATP synthase subunit beta, chloroplastic (284 aa).

Belongs to the ATPase alpha/beta chains family. F-type ATPases have 2 components, CF(1) - the catalytic core - and CF(0) - the membrane proton channel. CF(1) has five subunits: alpha(3), beta(3), gamma(1), delta(1), epsilon(1). CF(0) has four main subunits: a(1), b(1), b'(1) and c(9-12).

Its subcellular location is the plastid. The protein localises to the chloroplast thylakoid membrane. The catalysed reaction is ATP + H2O + 4 H(+)(in) = ADP + phosphate + 5 H(+)(out). In terms of biological role, produces ATP from ADP in the presence of a proton gradient across the membrane. The catalytic sites are hosted primarily by the beta subunits. This Asplenium nidus (Bird's nest fern) protein is ATP synthase subunit beta, chloroplastic (atpB).